A 349-amino-acid polypeptide reads, in one-letter code: N-formyl peptide receptor 3 (349 aa).

Residues 1 to 27 (METNFSIPLNETEEVLPEPAGHTVLWI) are Extracellular-facing. N-linked (GlcNAc...) asparagine glycans are attached at residues Asn-4 and Asn-10. The chain crosses the membrane as a helical span at residues 28 to 50 (FSLLVHGVTFVFGVLGNGLVIWV). Over 51–61 (AGFRMTRTVNT) the chain is Cytoplasmic. A helical transmembrane segment spans residues 62 to 83 (ICYLNLALADFSFSAILPFRMV). Residues 84–100 (SVAMREKWPFGSFLCKL) are Extracellular-facing. Residues Cys-98 and Cys-176 are joined by a disulfide bond. A helical membrane pass occupies residues 101 to 121 (VHVMIDINLFVSVYLITIIAL). The Cytoplasmic segment spans residues 122–140 (DRCICVLHPAWAQNHRTMS). The chain crosses the membrane as a helical span at residues 141–162 (LAKRVMTGLWILTIVLTLPNFI). Topologically, residues 163-205 (FWTTIRTTNGDTYCIFNFAFWGDTAVERLNVFITMAKVFLILH) are extracellular. Residues 206-226 (FIIGFSMPMSIITVCYGIIAA) traverse the membrane as a helical segment. Residues 227–242 (KIHRNHMIKSSRPLRV) lie on the Cytoplasmic side of the membrane. Residues 243-266 (FAAVVASFFICWFPYELIGILMAV) form a helical membrane-spanning segment. Over 267–286 (WLKEMLLNGKYKIILVLINP) the chain is Extracellular. A helical transmembrane segment spans residues 287–306 (TSSLAFFNSCLNPILYVFMG). Residues 307–349 (RNFQERLIRSLPTSLERALTEVPDSAQTSNTHTTSASPPEETE) lie on the Cytoplasmic side of the membrane. Residues 327-349 (EVPDSAQTSNTHTTSASPPEETE) are disordered. Residues 331-343 (SAQTSNTHTTSAS) show a composition bias toward polar residues.

Belongs to the G-protein coupled receptor 1 family.

It localises to the cell membrane. Low affinity receptor for N-formyl-methionyl peptides, which are powerful neutrophils chemotactic factors. Binding of FMLP to the receptor causes activation of neutrophils. This response is mediated via a G-protein that activates a phosphatidylinositol-calcium second messenger system. The chain is N-formyl peptide receptor 3 (FPR3) from Pan troglodytes (Chimpanzee).